We begin with the raw amino-acid sequence, 424 residues long: Serine--tRNA ligase (424 aa).

229-231 contributes to the L-serine binding site; sequence TAE. 260–262 serves as a coordination point for ATP; that stretch reads RRE. Position 283 (Glu283) interacts with L-serine. 347–350 is an ATP binding site; it reads EVSS. Residue Ser383 participates in L-serine binding.

This sequence belongs to the class-II aminoacyl-tRNA synthetase family. Type-1 seryl-tRNA synthetase subfamily. Homodimer. The tRNA molecule binds across the dimer.

Its subcellular location is the cytoplasm. It carries out the reaction tRNA(Ser) + L-serine + ATP = L-seryl-tRNA(Ser) + AMP + diphosphate + H(+). The catalysed reaction is tRNA(Sec) + L-serine + ATP = L-seryl-tRNA(Sec) + AMP + diphosphate + H(+). The protein operates within aminoacyl-tRNA biosynthesis; selenocysteinyl-tRNA(Sec) biosynthesis; L-seryl-tRNA(Sec) from L-serine and tRNA(Sec): step 1/1. In terms of biological role, catalyzes the attachment of serine to tRNA(Ser). Is also able to aminoacylate tRNA(Sec) with serine, to form the misacylated tRNA L-seryl-tRNA(Sec), which will be further converted into selenocysteinyl-tRNA(Sec). This chain is Serine--tRNA ligase, found in Roseiflexus castenholzii (strain DSM 13941 / HLO8).